The primary structure comprises 386 residues: MTNTTDGDLLLKNITAQAPFPICFADLEKAVAEKIPAGPFGYIRSGAGGEQTLRNNRSAFEKYSIVPRFLNDVSNVHTSINLFGKTYPTPLLFAPVGMNGMVHEEGELAAVRAAQQLNMPYIQSTVSTYALEDVAEAAPSATKWFQLYWSTNEEIAFSMAARAESAGFEAIVLTVDTVMLGWREEDVRNQFSPLKLGYAKGNYINDPVFMASLPNDSFESYVQGVLQNVFHPTLNWEHVRELKRRTNLPILLKGILHPEDAKLAIVNGVDGIIVSNHGGRQLDGVIGSLDALPSIVSAVKGQIPIILDSGVYRGMDALKALALGADAVAIGRPFIYGLALEGQQGVERVMTNIYDELKVSIALAGTTSIEGLRTITLVKNDGMEVK.

One can recognise an FMN hydroxy acid dehydrogenase domain in the interval 16 to 382 (AQAPFPICFA…RTITLVKNDG (367 aa)). Tyr42 serves as a coordination point for pyruvate. Residues 95 to 97 (PVG), Ser124, and Gln146 contribute to the FMN site. Tyr148 lines the pyruvate pocket. An FMN-binding site is contributed by Thr174. Arg183 serves as a coordination point for pyruvate. Residues Lys253 and Ser275 each contribute to the FMN site. Pyruvate contacts are provided by His277 and Arg280. His277 acts as the Proton acceptor in catalysis. FMN contacts are provided by residues 308 to 312 (DSGVY) and Arg332.

The protein belongs to the FMN-dependent alpha-hydroxy acid dehydrogenase family. As to quaternary structure, homotetramer. Requires FMN as cofactor.

It carries out the reaction a (2S)-2-hydroxycarboxylate + O2 = a 2-oxocarboxylate + H2O2. The catalysed reaction is (S)-lactate + O2 = pyruvate + H2O2. It catalyses the reaction 2-hydroxyoctanoate + O2 = 2-oxooctanoate + H2O2. The enzyme catalyses mandelate + O2 = phenylglyoxylate + H2O2. It carries out the reaction 2-hydroxyoctadecanoate + O2 = 2-oxooctadecanoate + H2O2. The catalysed reaction is (S)-2-hydroxyglutarate + O2 = H2O2 + 2-oxoglutarate. Functionally, oxidase that catalyzes the oxidation of a broad range of 2-hydroxyacids in vitro, such as (S)-lactate, 2-hydroxyoctanoate, mandelate, 2-hydroxyoctadecanoate and (S)-2-hydroxyglutarate, to the corresponding 2-oxoacids, with a reduction of O2 to H2O2. May be involved in the utilization of L-lactate as an energy source for growth. The protein is L-lactate oxidase of Lysinibacillus sphaericus (strain C3-41).